Here is a 294-residue protein sequence, read N- to C-terminus: MTIFKKVTTMISWVLLACALPCAADPMLGAFARRDFQKGGPQLVCSLPGPQGPPGPPGAPGSSGVVGRMGFPGKDGQDGQDGDRGDSGEEGPPGRTGNRGKQGPKGKAGAIGRAGPRGPKGVSGTPGKHGTPGKKGPKGKKGEPGLPGPCSCGSSRAKSAFSVAVTKSYPRERLPIKFDKILMNEGGHYNASSGKFVCSVPGIYYFTYDITLANKHLAIGLVHNGQYRIRTFDANTGNHDVASGSTILALKEGDEVWLQIFYSEQNGLFYDPYWTDSLFTGFLIYADQGDPNEV.

The signal sequence occupies residues 1-24 (MTIFKKVTTMISWVLLACALPCAA). The disordered stretch occupies residues 42 to 156 (QLVCSLPGPQ…PGPCSCGSSR (115 aa)). Residues 48 to 150 (PGPQGPPGPP…KGEPGLPGPC (103 aa)) enclose the Collagen-like domain. Pro residues predominate over residues 50 to 59 (PQGPPGPPGA). The span at 75–87 (DGQDGQDGDRGDS) shows a compositional bias: basic and acidic residues. Residues 105 to 129 (KGKAGAIGRAGPRGPKGVSGTPGKH) show a composition bias toward low complexity. Residues 154 to 290 (SSRAKSAFSV…GFLIYADQGD (137 aa)) enclose the C1q domain.

As to quaternary structure, may interact with ERFE.

It localises to the secreted. Its function is as follows. Involved in the regulation of lipid metabolism in adipose tissue and liver. This is Complement C1q tumor necrosis factor-related protein 2 (C1qtnf2) from Mus musculus (Mouse).